We begin with the raw amino-acid sequence, 197 residues long: ATP-dependent Clp protease proteolytic subunit 3 (197 aa).

Catalysis depends on S96, which acts as the Nucleophile. The active site involves H121.

It belongs to the peptidase S14 family. Fourteen ClpP subunits assemble into 2 heptameric rings which stack back to back to give a disk-like structure with a central cavity, resembling the structure of eukaryotic proteasomes.

Its subcellular location is the cytoplasm. It carries out the reaction Hydrolysis of proteins to small peptides in the presence of ATP and magnesium. alpha-casein is the usual test substrate. In the absence of ATP, only oligopeptides shorter than five residues are hydrolyzed (such as succinyl-Leu-Tyr-|-NHMec, and Leu-Tyr-Leu-|-Tyr-Trp, in which cleavage of the -Tyr-|-Leu- and -Tyr-|-Trp bonds also occurs).. Cleaves peptides in various proteins in a process that requires ATP hydrolysis. Has a chymotrypsin-like activity. Plays a major role in the degradation of misfolded proteins. The polypeptide is ATP-dependent Clp protease proteolytic subunit 3 (Prochlorococcus marinus (strain MIT 9313)).